Consider the following 274-residue polypeptide: METNWRLLDTGHRPGPENMAIDEAIAMAHGRGEVPPTLRFYGWNPPAVSIGYFQSMLGEVDLDAVRAGGYGYVRRPTGGRLIFHHMELTYSVVIREELLPGGVIETYREISRGLLAGMAELGVPAALSGGDRDPRRADPDGFHTACFDTASAYELQVGGRKVAGSAQTRRDGVILQHGSILLDIDVPLLFRLMRLPEGIPAERLMARFRAKSTTLAEALGRPVSWAEARDAFAAGFARALGLTLTPGQLTEREEKEAQTLVEAKYGCDNWNMRK.

Residues 32–244 (GEVPPTLRFY…GFARALGLTL (213 aa)) enclose the BPL/LPL catalytic domain. Cysteine 146 (acyl-thioester intermediate) is an active-site residue.

The protein belongs to the octanoyltransferase LipM family. As to quaternary structure, monomer.

The enzyme catalyses octanoyl-[ACP] + L-lysyl-[protein] = N(6)-octanoyl-L-lysyl-[protein] + holo-[ACP] + H(+). It participates in protein modification; protein lipoylation via endogenous pathway; protein N(6)-(lipoyl)lysine from octanoyl-[acyl-carrier-protein]. In terms of biological role, catalyzes the transfer of endogenously produced octanoic acid from octanoyl-acyl-carrier-protein onto the lipoyl domain of GcvH, an intermediate carrier during protein lipoylation. This chain is Octanoyltransferase LipM, found in Symbiobacterium thermophilum (strain DSM 24528 / JCM 14929 / IAM 14863 / T).